A 411-amino-acid chain; its full sequence is Glutamate dehydrogenase 1, mitochondrial (411 aa).

The transit peptide at 1-18 (MNALAATSRNFKQAAKLL) directs the protein to the mitochondrion. Lys-102 is an active-site residue.

Belongs to the Glu/Leu/Phe/Val dehydrogenases family.

Its subcellular location is the mitochondrion. It carries out the reaction L-glutamate + NAD(+) + H2O = 2-oxoglutarate + NH4(+) + NADH + H(+). The catalysed reaction is L-glutamate + NADP(+) + H2O = 2-oxoglutarate + NH4(+) + NADPH + H(+). The sequence is that of Glutamate dehydrogenase 1, mitochondrial (GDH1) from Oryza sativa subsp. indica (Rice).